The following is a 673-amino-acid chain: UvrABC system protein B (673 aa).

Residues 26-183 (EGLEDGLAHQ…RRLAELQYTR (158 aa)) enclose the Helicase ATP-binding domain. Residue 39 to 46 (GVTGSGKT) participates in ATP binding. A Beta-hairpin motif is present at residues 92–115 (YYDYYQPEAYVPSSDTFIEKDASV). The Helicase C-terminal domain maps to 431–597 (QVDDLLSEIR…GLNKKVVDIL (167 aa)). The UVR domain occupies 633-668 (QQKIHELEGQMMQHAQNLEFEEAAQIRDQLHQLREL).

The protein belongs to the UvrB family. In terms of assembly, forms a heterotetramer with UvrA during the search for lesions. Interacts with UvrC in an incision complex.

The protein resides in the cytoplasm. In terms of biological role, the UvrABC repair system catalyzes the recognition and processing of DNA lesions. A damage recognition complex composed of 2 UvrA and 2 UvrB subunits scans DNA for abnormalities. Upon binding of the UvrA(2)B(2) complex to a putative damaged site, the DNA wraps around one UvrB monomer. DNA wrap is dependent on ATP binding by UvrB and probably causes local melting of the DNA helix, facilitating insertion of UvrB beta-hairpin between the DNA strands. Then UvrB probes one DNA strand for the presence of a lesion. If a lesion is found the UvrA subunits dissociate and the UvrB-DNA preincision complex is formed. This complex is subsequently bound by UvrC and the second UvrB is released. If no lesion is found, the DNA wraps around the other UvrB subunit that will check the other stand for damage. The polypeptide is UvrABC system protein B (Klebsiella pneumoniae (strain 342)).